The following is a 584-amino-acid chain: A-type ATP synthase subunit A 2 (584 aa).

227–234 serves as a coordination point for ATP; the sequence is GGFGTGKT.

The protein belongs to the ATPase alpha/beta chains family. As to quaternary structure, has multiple subunits with at least A(3), B(3), C, D, E, F, H, I and proteolipid K(x).

It is found in the cell membrane. It catalyses the reaction ATP + H2O + 4 H(+)(in) = ADP + phosphate + 5 H(+)(out). Its function is as follows. Component of the A-type ATP synthase that produces ATP from ADP in the presence of a proton gradient across the membrane. The A chain is the catalytic subunit. This chain is A-type ATP synthase subunit A 2, found in Methanospirillum hungatei JF-1 (strain ATCC 27890 / DSM 864 / NBRC 100397 / JF-1).